A 453-amino-acid chain; its full sequence is MEQQPSVPRSCTNVARETPMNLNIQSTTGTRYELSVPPDETVDGLKRRISQRLKVPKERLTLLHRETRLSSGKLQDLGISDGSRLTLLPSVEAGLMSQMSRPEQSVMQALESLTETQVNDFLSGRSPLTLALRVGDHMMFVQLQLAAQQSGASHLQHRHVITRGAEAGASPQYRTLHTSTSALSHLASCTPGSTPPTTLSPTASTHRDGPHSSPLTTSVFRSHGEGVAVSPCAEQVPCSSRGTEGTSSSASSRSRKPGAIIESFVNHAPGVFSGTFSGTLHPHCQDSAGRPRRDIGTILQILNDLLSATRHYQGMPPSLTTLRCHTQCASQARNPKATSPQSSEPQQTTHPVGHCQAQTRTCKPSGDRLRQTENRATRCKVERLQLLMHQKRLRRKARRDSRAPYHWMPTRKSSRTSSNSSTSSGEGSLEIDFEDSLWKPDVKAELNSEFVVA.

A Ubiquitin-like domain is found at 20–94 (MNLNIQSTTG…LTLLPSVEAG (75 aa)). Disordered stretches follow at residues 185 to 219 (HLAS…TTSV), 231 to 256 (PCAE…RSRK), 330 to 374 (SQAR…QTEN), and 390 to 434 (QKRL…IDFE). Composition is skewed to low complexity over residues 188-204 (SCTP…PTAS) and 239-252 (SSRG…SASS). Residues 330-362 (SQARNPKATSPQSSEPQQTTHPVGHCQAQTRTC) are compositionally biased toward polar residues. Residues 365 to 374 (SGDRLRQTEN) show a composition bias toward basic and acidic residues. Basic residues predominate over residues 390-399 (QKRLRRKARR). The segment covering 415–428 (RTSSNSSTSSGEGS) has biased composition (low complexity).

The protein resides in the nucleus. The protein localises to the cytoplasm. It localises to the cytosol. Its subcellular location is the nucleolus. In terms of biological role, facilitates ubiquitin-independent proteasomal degradation of polycomb protein CBX4. Plays a role in inhibiting the activity of glucokinase GCK and both glucose-induced and basal insulin secretion. The polypeptide is Midnolin (midn) (Xenopus tropicalis (Western clawed frog)).